We begin with the raw amino-acid sequence, 157 residues long: SsrA-binding protein (157 aa).

Belongs to the SmpB family.

It is found in the cytoplasm. Its function is as follows. Required for rescue of stalled ribosomes mediated by trans-translation. Binds to transfer-messenger RNA (tmRNA), required for stable association of tmRNA with ribosomes. tmRNA and SmpB together mimic tRNA shape, replacing the anticodon stem-loop with SmpB. tmRNA is encoded by the ssrA gene; the 2 termini fold to resemble tRNA(Ala) and it encodes a 'tag peptide', a short internal open reading frame. During trans-translation Ala-aminoacylated tmRNA acts like a tRNA, entering the A-site of stalled ribosomes, displacing the stalled mRNA. The ribosome then switches to translate the ORF on the tmRNA; the nascent peptide is terminated with the 'tag peptide' encoded by the tmRNA and targeted for degradation. The ribosome is freed to recommence translation, which seems to be the essential function of trans-translation. This chain is SsrA-binding protein, found in Chlorobium luteolum (strain DSM 273 / BCRC 81028 / 2530) (Pelodictyon luteolum).